Consider the following 404-residue polypeptide: NADH-quinone oxidoreductase subunit D (404 aa).

This sequence belongs to the complex I 49 kDa subunit family. As to quaternary structure, NDH-1 is composed of 14 different subunits. Subunits NuoB, C, D, E, F, and G constitute the peripheral sector of the complex.

The protein localises to the cell inner membrane. The catalysed reaction is a quinone + NADH + 5 H(+)(in) = a quinol + NAD(+) + 4 H(+)(out). Its function is as follows. NDH-1 shuttles electrons from NADH, via FMN and iron-sulfur (Fe-S) centers, to quinones in the respiratory chain. The immediate electron acceptor for the enzyme in this species is believed to be ubiquinone. Couples the redox reaction to proton translocation (for every two electrons transferred, four hydrogen ions are translocated across the cytoplasmic membrane), and thus conserves the redox energy in a proton gradient. The sequence is that of NADH-quinone oxidoreductase subunit D from Leptospira borgpetersenii serovar Hardjo-bovis (strain JB197).